Consider the following 1550-residue polypeptide: Cellulose synthase 1 (1550 aa).

Residues 1–741 (MPEVRSSTQS…KERVLKGTVK (741 aa)) form a catalytic region. The next 3 membrane-spanning stretches (helical) occupy residues 26-46 (GAGL…TSVT), 47-67 (LPPE…FIVG), and 106-126 (GLLG…LFLS). The segment at 147–240 (EWPTVDIFVP…YILIFDCDHV (94 aa)) is catalytic subdomain A. Aspartate 189 is an active-site residue. The substrate site is built by aspartate 236 and aspartate 238. Residues 317-377 (TAIEQIGGFA…GQRVRWARGM (61 aa)) form a catalytic subdomain B region. Aspartate 333 is a catalytic residue. The next 5 helical transmembrane spans lie at 398–418 (LCYL…IFLS), 423–443 (FLFF…AYAI), 468–488 (VYET…LLSP), 507–527 (FDLG…GGLA), and 547–567 (LLNS…IAVG). Positions 572-647 (QKRNSHRIPA…PARIIRAGNG (76 aa)) constitute a PilZ domain. Disordered regions lie at residues 711 to 734 (SSPT…RKER) and 768 to 813 (APAH…QPLA). A cyclic di-GMP binding domain region spans residues 742-1550 (MVSLLALLTF…KQLEDERRKS (809 aa)). The segment covering 768 to 796 (APAHQPEASDLPPLPALLPATSGAAQAGA) has biased composition (low complexity). The helical transmembrane segment at 1513–1533 (VLLVGLLGCILIVSVLARALA) threads the bilayer.

This sequence in the N-terminal section; belongs to the glycosyltransferase 2 family. It in the C-terminal section; belongs to the AcsB/BcsB family. It depends on Mg(2+) as a cofactor.

It is found in the cell inner membrane. It catalyses the reaction [(1-&gt;4)-beta-D-glucosyl](n) + UDP-alpha-D-glucose = [(1-&gt;4)-beta-D-glucosyl](n+1) + UDP + H(+). It participates in glycan metabolism; bacterial cellulose biosynthesis. Its activity is regulated as follows. Activated by c-di-GMP. Functionally, bifunctional protein comprised of a catalytic subunit and a regulatory subunit. The catalytic subunit of cellulose synthase polymerizes uridine 5'-diphosphate glucose to cellulose in a processive way. The thick cellulosic mats generated by this enzyme probably provide a specialized protective environment to the bacterium. The regulatory subunit binds bis-(3'-5') cyclic diguanylic acid (c-di-GMP). In Komagataeibacter xylinus (Gluconacetobacter xylinus), this protein is Cellulose synthase 1 (acsAB).